We begin with the raw amino-acid sequence, 541 residues long: DEAD-box ATP-dependent RNA helicase 57 (541 aa).

A compositionally biased stretch (acidic residues) spans 43–52 (VEEEEDTEQP). Residues 43 to 72 (VEEEEDTEQPEAEKVIVSSKKRKRRSSNSV) are disordered. The short motif at 141–169 (ELSSRYGCEGYILRNLAELGFKEPTPIQR) is the Q motif element. The 171-residue stretch at 172–342 (IPILLSGREC…RSIMHDAVRV (171 aa)) folds into the Helicase ATP-binding domain. 185 to 192 (APTGSGKT) lines the ATP pocket. Residues 289-292 (DESD) carry the DEAD box motif. The Helicase C-terminal domain maps to 370–514 (ALRQSFAESL…EVPSWIMSLK (145 aa)). The segment at 517 to 541 (KWRKHRPRRDSISTKPKADKNDTDE) is disordered. Over residues 525-541 (RDSISTKPKADKNDTDE) the composition is skewed to basic and acidic residues.

This sequence belongs to the DEAD box helicase family. DDX52/ROK1 subfamily.

It catalyses the reaction ATP + H2O = ADP + phosphate + H(+). In Arabidopsis thaliana (Mouse-ear cress), this protein is DEAD-box ATP-dependent RNA helicase 57 (RH57).